Consider the following 201-residue polypeptide: Troponin I (201 aa).

At A1 the chain carries N-acetylalanine. Basic and acidic residues predominate over residues 1 to 33 (ADKAKAAEEAKKKQDDIDRKKAEVRKRLEEQSL). The interval 1 to 45 (ADKAKAAEEAKKKQDDIDRKKAEVRKRLEEQSLKKQKKGFMTPER) is disordered. Residues 108 to 117 (IESDKYDVEL) form a troponin T-interaction region. The interval 135 to 148 (DLRGKFIKPTLKKV) is actin-binding. 2 positions are modified to N6,N6,N6-trimethyllysine: K142 and K146. A disordered region spans residues 182–201 (EDDKGATEGDGPAAEEVAAE).

Belongs to the troponin I family.

In terms of biological role, troponin I is the actomyosin ATPase inhibitory subunit present in the thin filament regulatory complex. The polypeptide is Troponin I (Astacus leptodactylus (Turkish narrow-clawed crayfish)).